Consider the following 407-residue polypeptide: Putative metabolite transport protein HI_1104 (407 aa).

Residues 1-16 (MTNKVNSYGWKALIGS) lie on the Cytoplasmic side of the membrane. A helical transmembrane segment spans residues 17–37 (AVGYGMDGFDLLILGFMLSAI). Topologically, residues 38–48 (SADLNLTPAQG) are periplasmic. A helical membrane pass occupies residues 49-69 (GSLVTWTLIGAVFGGILFGAL). Residues 70-77 (SDKYGRVR) lie on the Cytoplasmic side of the membrane. Residues 78–98 (VLTWTILLFAVFTGLCAIAQG) traverse the membrane as a helical segment. Over 99–107 (YWDLLIYRT) the chain is Periplasmic. Residues 108-128 (IAGIGLGGEFGIGMALAAEAW) form a helical membrane-spanning segment. The Cytoplasmic portion of the chain corresponds to 129 to 138 (PARHRAKAAS). A helical transmembrane segment spans residues 139–159 (YVALGWQVGVLGAALLTPLLL). Pro160 is a topological domain (periplasmic). Residues 161-181 (HIGWRGMFLVGIFPAFVAWFL) traverse the membrane as a helical segment. Over 182–224 (RSHLHEPEIFTQKQTALSTQSSFTDKLRSFQLLIKDKATSKIS) the chain is Cytoplasmic. Residues 225–245 (LGIVVLTSVQNFGYYGIMIWL) form a helical membrane-spanning segment. The Periplasmic portion of the chain corresponds to 246 to 261 (PNFLSKQLGFSLTKSG). A helical membrane pass occupies residues 262–282 (LWTAVTVCGMMAGIWIFGQLA). Topologically, residues 283–288 (DRIGRK) are cytoplasmic. The helical transmembrane segment at 289–309 (PSFLLFQLGAVISIVVYSQLT) threads the bilayer. Residues 310–312 (DPD) are Periplasmic-facing. The helical transmembrane segment at 313–333 (IMLLAGAFLGMFVNGMLGGYG) threads the bilayer. The Cytoplasmic segment spans residues 334–357 (ALMAEAYPTEARATAQNVLFNIGR). The next 2 membrane-spanning stretches (helical) occupy residues 358–378 (AVGG…SFQT) and 379–399 (AIAL…FLIP). Residues 400–407 (ELKGKALD) lie on the Cytoplasmic side of the membrane.

Belongs to the major facilitator superfamily. Aromatic acid:H(+) symporter (AAHS) (TC 2.A.1.15) family.

The protein resides in the cell inner membrane. This chain is Putative metabolite transport protein HI_1104, found in Haemophilus influenzae (strain ATCC 51907 / DSM 11121 / KW20 / Rd).